The sequence spans 65 residues: Large ribosomal subunit protein bL35 (65 aa).

Residues 1 to 20 (MPKMKTNSGSKKRFTLTGTG) are disordered.

It belongs to the bacterial ribosomal protein bL35 family.

This chain is Large ribosomal subunit protein bL35, found in Bacteroides thetaiotaomicron (strain ATCC 29148 / DSM 2079 / JCM 5827 / CCUG 10774 / NCTC 10582 / VPI-5482 / E50).